We begin with the raw amino-acid sequence, 47 residues long: Photosystem II reaction center protein K (47 aa).

The propeptide occupies 1–10 (MAPLTLDLLA). The helical transmembrane segment at 26–46 (LPLIPLLFFLLVFVWQAAVGF) threads the bilayer.

Belongs to the PsbK family. As to quaternary structure, PSII is composed of 1 copy each of membrane proteins PsbA, PsbB, PsbC, PsbD, PsbE, PsbF, PsbH, PsbI, PsbJ, PsbK, PsbL, PsbM, PsbT, PsbX, PsbY, Psb30/Ycf12, peripheral proteins PsbO, CyanoQ (PsbQ), PsbU, PsbV and a large number of cofactors. It forms dimeric complexes.

It is found in the cellular thylakoid membrane. Functionally, one of the components of the core complex of photosystem II (PSII). PSII is a light-driven water:plastoquinone oxidoreductase that uses light energy to abstract electrons from H(2)O, generating O(2) and a proton gradient subsequently used for ATP formation. It consists of a core antenna complex that captures photons, and an electron transfer chain that converts photonic excitation into a charge separation. In Prochlorococcus marinus (strain SARG / CCMP1375 / SS120), this protein is Photosystem II reaction center protein K.